An 816-amino-acid polypeptide reads, in one-letter code: Transcription factor qa-1f (816 aa).

The segment at residues 76–103 is a DNA-binding region (zn(2)-C6 fungal-type); the sequence is CDQCRAAREKCDGIQPACFPCVSQGRSC. The span at 184 to 202 shows a compositional bias: polar residues; sequence SGQAAQDPSEDGQSPSEDI. The interval 184-235 is disordered; the sequence is SGQAAQDPSEDGQSPSEDINVQDAGAKTSDFPHAPHLTFSAPKSSTAETRTL.

The protein resides in the nucleus. Its function is as follows. Transcription activator; part of the qa gene cluster that mediates the catabolism of quinic acid (QA) and as such, allows the use of QA as a sole carbon source. Activates the expression of qa cluster genes by binding to a 16 base-pair consensus sequence 5'-GGRTAARYRYTTAYCC-3' present in the promoters of the target genes. Regulates its own expression. May regulate the expression of many other genes inclusing genes with products in 8 mutually connected metabolic pathways: (1) starch and sucrose metabolism; (2) glycolysis/glucanogenesis; (3) TCA Cycle; (4) butanoate metabolism; (5) pyruvate metabolism; (6) aromatic amino acid and QA metabolism; (7) valine, leucine, and isoleucine degradation; and (8) transport of sugars and amino acids. The protein is Transcription factor qa-1f of Neurospora crassa (strain ATCC 24698 / 74-OR23-1A / CBS 708.71 / DSM 1257 / FGSC 987).